Here is a 244-residue protein sequence, read N- to C-terminus: MNNSLSPKAIRELREETCNPLGAPQVTTDLSENIIMTSLDDLHNWARLSSLWPLLYGTACCFIEFAALIGSRFDFDRFGLVPRSSPRQADLLIVAGTVTMKMAPALVRLYEQMPEPKYVIAMGACTITGGMFSADSTTAVRGVDKLIPVDLYLPGCPPRPEAIFDAVIKLRKKVGNESILERNKAEQTHRYLTVKHDMKLVFSENTGEYLNKKSEKAIKSSDLEMIEENIKVKIEENLIDEETK.

[4Fe-4S] cluster contacts are provided by cysteine 60, cysteine 61, cysteine 125, and cysteine 156.

This sequence belongs to the complex I 20 kDa subunit family. As to quaternary structure, NDH-1 can be composed of about 15 different subunits; different subcomplexes with different compositions have been identified which probably have different functions. The cofactor is [4Fe-4S] cluster.

It localises to the cellular thylakoid membrane. It catalyses the reaction a plastoquinone + NADH + (n+1) H(+)(in) = a plastoquinol + NAD(+) + n H(+)(out). The enzyme catalyses a plastoquinone + NADPH + (n+1) H(+)(in) = a plastoquinol + NADP(+) + n H(+)(out). NDH-1 shuttles electrons from an unknown electron donor, via FMN and iron-sulfur (Fe-S) centers, to quinones in the respiratory and/or the photosynthetic chain. The immediate electron acceptor for the enzyme in this species is believed to be plastoquinone. Couples the redox reaction to proton translocation, and thus conserves the redox energy in a proton gradient. Cyanobacterial NDH-1 also plays a role in inorganic carbon-concentration. This chain is NAD(P)H-quinone oxidoreductase subunit K, found in Prochlorococcus marinus (strain MIT 9515).